The following is a 116-amino-acid chain: Transcription initiation factor IIA subunit 2 (116 aa).

Belongs to the TFIIA subunit 2 family. TFIIA is a heterodimer composed of the large TOA1 and the small TOA2 subunits.

Its subcellular location is the nucleus. TFIIA is a component of the transcription machinery of RNA polymerase II and plays an important role in transcriptional activation. TFIIA in a complex with tbp mediates transcriptional activity. This chain is Transcription initiation factor IIA subunit 2 (TOA2), found in Pyricularia oryzae (strain 70-15 / ATCC MYA-4617 / FGSC 8958) (Rice blast fungus).